We begin with the raw amino-acid sequence, 712 residues long: MREPALAASAMAYHPFHAPRPADFPMSAFLAAAQPSFFPALALPPGALAKPLPDPGLAGAAAAAAAAAAAAEAGLHVSALGPHPPAAHLRSLKSLEPEDEVEDDPKVTLEAKELWDQFHKLGTEMVITKSGRRMFPPFKVRVSGLDKKAKYILLMDIVAADDCRYKFHNSRWMVAGKADPEMPKRMYIHPDSPATGEQWMAKPVAFHKLKLTNNISDKHGFTILNSMHKYQPRFHIVRANDILKLPYSTFRTYVFPETDFIAVTAYQNDKITQLKIDNNPFAKGFRDTGNGRREKRKQLTLPSLRLYEEHCKPERDGAESDASSCDPPPAREPPTSPGAAPSPLRLHRARAEEKSCAADSDPEPERLSEERAGAPLGRSPAPDSASPTRLTEPERARERRSPERGKEPAESGGDGPFGLRSLEKERAEARRKDEGRKEAAEGKEQGLAPLVVQTDSASPLGAGHLPGLAFSSHLHGQQFFGPLGAGQPLFLHPGQFTMGPGAFSAMGMGHLLASVAGGGNGGGGGPGTAAGLDAGGLGPAASAASTAAPFPFHLSQHMLASQGIPMPTFGGLFPYPYTYMAAAAAAASALPATSAAAAAAAAAGSLSRSPFLGSARPRLRFSPYQIPVTIPPSTSLLTTGLASEGSKAAGGNSREPSPLPELALRKVGAPSRGALSPSGSAKEAANELQSIQRLVSGLESQRALSPGRESPK.

The segment at residues 109–287 (LEAKELWDQF…NNPFAKGFRD (179 aa)) is a DNA-binding region (T-box). The segment at 313-450 (PERDGAESDA…EGKEQGLAPL (138 aa)) is disordered. The span at 326–336 (DPPPAREPPTS) shows a compositional bias: pro residues. Serine 336, serine 342, and serine 360 each carry phosphoserine. Basic and acidic residues-rich tracts occupy residues 363–372 (EPERLSEERA), 391–409 (TEPE…KEPA), and 421–444 (SLEK…EGKE). The tract at residues 518-601 (GGNGGGGGPG…ATSAAAAAAA (84 aa)) is repression domain 1 (RD1). Phosphoserine occurs at positions 622, 653, 657, and 676. The tract at residues 637–687 (LTTGLASEGSKAAGGNSREPSPLPELALRKVGAPSRGALSPSGSAKEAANE) is disordered.

As to quaternary structure, binds DNA as a monomer. Interacts with PML (isoform PML-2, isoform PML-3 and isoform PML-4). In terms of tissue distribution, expressed primarily in adult in kidney, lung, and placenta. Weak expression in heart and ovary.

Its subcellular location is the nucleus. Functionally, transcription factor which acts as a transcriptional repressor. May also function as a transcriptional activator. Binds to the palindromic T site 5'-TTCACACCTAGGTGTGAA-3' DNA sequence, or a half-site, which are present in the regulatory region of several genes. Required for cardiac atrioventricular canal formation. May cooperate with NKX2.5 to negatively modulate expression of NPPA/ANF in the atrioventricular canal. May play a role as a positive regulator of TGFB2 expression, perhaps acting in concert with GATA4 in the developing outflow tract myocardium. Plays a role in limb pattern formation. Acts as a transcriptional repressor of ADAM10 gene expression, perhaps in concert with histone deacetylase HDAC1 as cofactor. Involved in branching morphogenesis in both developing lungs and adult mammary glands, via negative modulation of target genes; acting redundantly with TBX3. Required, together with TBX3, to maintain cell proliferation in the embryonic lung mesenchyme; perhaps acting downstream of SHH, BMP and TGFbeta signaling. Involved in modulating early inner ear development, acting independently of, and also redundantly with TBX3, in different subregions of the developing ear. Acts as a negative regulator of PML function in cellular senescence. Acts as a negative regulator of expression of CDKN1A/p21, IL33 and CCN4; repression of CDKN1A is enhanced in response to UV-induced stress, perhaps as a result of phosphorylation by p38 MAPK. Negatively modulates expression of CDKN2A/p14ARF and CDH1/E-cadherin. Plays a role in induction of the epithelial-mesenchymal transition (EMT). Plays a role in melanocyte proliferation, perhaps via regulation of cyclin CCND1. Involved in melanogenesis, acting via negative modulation of expression of DHICA oxidase/TYRP1 and P protein/OCA2. Involved in regulating retinal pigment epithelium (RPE) cell proliferation, perhaps via negatively modulating transcription of the transcription factor CEBPD. The chain is T-box transcription factor TBX2 (TBX2) from Homo sapiens (Human).